A 226-amino-acid chain; its full sequence is Thiocyanate methyltransferase 1 (226 aa).

S-adenosyl-L-methionine is bound by residues W35, W39, W46, and G73. S85 is subject to Phosphoserine. Residues D94, 122 to 123, and Y138 contribute to the S-adenosyl-L-methionine site; that span reads DF.

Belongs to the class I-like SAM-binding methyltransferase superfamily. TPMT family. In terms of tissue distribution, ubiquitous.

The catalysed reaction is thiocyanate + S-adenosyl-L-methionine = methyl thiocyanate + S-adenosyl-L-homocysteine. In terms of biological role, S-adenosyl-L-methionine-dependent methyltransferase. Probably involved in glucosinolate metabolism and defense against phytopathogens. Highly reactive to thiocyanate (NCS(-)) derived from myrosinase-mediated hydrolysis of glucosinolates upon tissue damage. Also accepts halid ions as substrates with a lower affinity. This is Thiocyanate methyltransferase 1 (TMT1) from Brassica oleracea (Wild cabbage).